The following is a 284-amino-acid chain: Nucleotide-binding protein Teth39_0666 (284 aa).

8 to 15 contributes to the ATP binding site; the sequence is GLSGAGKT. A GTP-binding site is contributed by 58–61; the sequence is DLRG.

Belongs to the RapZ-like family.

Its function is as follows. Displays ATPase and GTPase activities. In Thermoanaerobacter pseudethanolicus (strain ATCC 33223 / 39E) (Clostridium thermohydrosulfuricum), this protein is Nucleotide-binding protein Teth39_0666.